Reading from the N-terminus, the 531-residue chain is Probable mitochondrial-processing peptidase subunit beta, mitochondrial (531 aa).

The transit peptide at M1–Y78 directs the protein to the mitochondrion. The segment at S30–H50 is disordered. H141 is a binding site for Zn(2+). The active-site Proton acceptor is E144. H145 contacts Zn(2+). E214 is a catalytic residue. E221 serves as a coordination point for Zn(2+).

Belongs to the peptidase M16 family. As to quaternary structure, heterodimer of an alpha subunit and a beta subunit subunits, forming the mitochondrial processing protease (MPP) in which the alpha subunit is involved in substrate recognition and binding and the beta subunit is the catalytic subunit. Component of the ubiquinol-cytochrome c oxidoreductase (cytochrome b-c1 complex, complex III, CIII), a multisubunit enzyme composed of 10 subunits. The complex is composed of 3 respiratory subunits cytochrome b (MT-CYB), cytochrome c1 (CYC1-1 or CYC1-2) and Rieske protein (UCR1-1 or UCR1-2), 2 core protein subunits MPPalpha1 (or MPPalpha2) and MPPB, and 5 low-molecular weight protein subunits QCR7-1 (or QCR7-2), UCRQ-1 (or UCRQ-2), QCR9, UCRY and probably QCR6-1 (or QCR6-2). The complex exists as an obligatory dimer and forms supercomplexes (SCs) in the inner mitochondrial membrane with NADH-ubiquinone oxidoreductase (complex I, CI), resulting in different assemblies (supercomplexes SCI(1)III(2) and SCI(2)III(4)). It depends on Zn(2+) as a cofactor.

The protein localises to the mitochondrion. It localises to the mitochondrion inner membrane. It catalyses the reaction Release of N-terminal transit peptides from precursor proteins imported into the mitochondrion, typically with Arg in position P2.. Binding to the alpha subunit is required for catalytic activity. Functionally, catalytic subunit of the essential mitochondrial processing protease (MPP), which cleaves the mitochondrial sequence off newly imported precursors proteins. Preferentially, cleaves after an arginine at position P2. In terms of biological role, component of the ubiquinol-cytochrome c oxidoreductase, a multisubunit transmembrane complex that is part of the mitochondrial electron transport chain which drives oxidative phosphorylation. The respiratory chain contains 3 multisubunit complexes succinate dehydrogenase (complex II, CII), ubiquinol-cytochrome c oxidoreductase (cytochrome b-c1 complex, complex III, CIII) and cytochrome c oxidase (complex IV, CIV), that cooperate to transfer electrons derived from NADH and succinate to molecular oxygen, creating an electrochemical gradient over the inner membrane that drives transmembrane transport and the ATP synthase. The cytochrome b-c1 complex catalyzes electron transfer from ubiquinol to cytochrome c, linking this redox reaction to translocation of protons across the mitochondrial inner membrane, with protons being carried across the membrane as hydrogens on the quinol. In the process called Q cycle, 2 protons are consumed from the matrix, 4 protons are released into the intermembrane space and 2 electrons are passed to cytochrome c. In Arabidopsis thaliana (Mouse-ear cress), this protein is Probable mitochondrial-processing peptidase subunit beta, mitochondrial (MPPbeta).